The primary structure comprises 514 residues: Voltage-gated potassium channel regulatory subunit KCNG1 (514 aa).

The Cytoplasmic portion of the chain corresponds to 1–224; it reads MTLLPGDNSH…DMVERPHSGL (224 aa). Residues 180–196 show a composition bias toward acidic residues; it reads MEREEEEEPLDSEDQES. Positions 180–205 are disordered; that stretch reads MEREEEEEPLDSEDQESEGPSASEGR. A helical membrane pass occupies residues 225 to 246; the sequence is PGKVFACLSVLFVTVTAVNLSV. Over 247-267 the chain is Extracellular; the sequence is STLPSLREEEEQGQCSQMCHN. A helical membrane pass occupies residues 268–289; it reads VFIVESVCVGWFSLEFLLRFIQ. Residues 290–300 are Cytoplasmic-facing; that stretch reads APSKFAFLRSP. The helical transmembrane segment at 301-321 threads the bilayer; it reads LTLIDLVAILPYYVTLLVDGA. Residues 322–338 lie on the Extracellular side of the membrane; the sequence is ASSRRKPSTGNSYLDKV. A helical; Voltage-sensor transmembrane segment spans residues 339 to 359; it reads GLVLRVLRALRILYVMRLARH. Residues 360–374 lie on the Cytoplasmic side of the membrane; the sequence is SLGLQTLGLTARRCT. A helical membrane pass occupies residues 375 to 396; the sequence is REFGLLLLFLCVAIALFAPLLY. The Extracellular segment spans residues 397-411; sequence VIENEMADSPEFTSI. The helical intramembrane region spans 412–423; that stretch reads PACYWWAVITMT. Positions 424-429 match the Selectivity filter motif; the sequence is TVGYGD. The stretch at 424–431 is an intramembrane region; sequence TVGYGDMV. Topologically, residues 432–438 are extracellular; it reads PRSTPGQ. A helical transmembrane segment spans residues 439–467; the sequence is VVALSSILSGILLMAFPVTSIFHTFSRSY. Residues 468-514 lie on the Cytoplasmic side of the membrane; sequence LELKQEQERVLIRRAQYLIKTKSQLSGMSQDSDILFGSASSDTRDNN.

Belongs to the potassium channel family. G (TC 1.A.1.2) subfamily. Kv6.1/KCNG1 sub-subfamily. In terms of assembly, heterotetramer with KCNB1 or KCNB2.

The protein localises to the cell membrane. In terms of biological role, regulatory alpha-subunit of the voltage-gated potassium (Kv) channel which, when coassembled with KCNB1 or KCNB2, can modulate their expression and their gating kinetics by acting on deactivation upon repolarization and inactivation during maintained depolarization. Potassium channel subunit that does not form functional channels by itself. The sequence is that of Voltage-gated potassium channel regulatory subunit KCNG1 from Mus musculus (Mouse).